The following is a 462-amino-acid chain: Phosphoglycerate kinase, chloroplastic (462 aa).

A chloroplast-targeting transit peptide spans 1-61 (MALSMKMRAN…AGRSRIVVEA (61 aa)). (2R)-3-phosphoglycerate-binding residues include A83, D84, N86, R101, S123, H124, G126, R127, R183, H215, and R216. Residue G261 participates in ADP binding. G261 contributes to the CDP binding site. Positions 263 and 267 each coordinate AMP. K267 is a binding site for ATP. ADP is bound at residue G285. G285 contacts CDP. G286 and G358 together coordinate AMP. The ATP site is built by G286 and G358. CDP-binding residues include G383 and F388. ADP is bound at residue F388. E389 is a binding site for AMP. ATP-binding residues include E389, D420, and S421. Residue D420 participates in Mg(2+) binding.

Belongs to the phosphoglycerate kinase family. As to quaternary structure, monomer. The cofactor is Mg(2+).

It localises to the plastid. The protein resides in the chloroplast. The catalysed reaction is (2R)-3-phosphoglycerate + ATP = (2R)-3-phospho-glyceroyl phosphate + ADP. The protein operates within carbohydrate biosynthesis; Calvin cycle. The chain is Phosphoglycerate kinase, chloroplastic (PGK) from Volvox carteri (Green alga).